The primary structure comprises 157 residues: Large ribosomal subunit protein uL22 (157 aa).

The protein belongs to the universal ribosomal protein uL22 family. Part of the 50S ribosomal subunit.

Functionally, this protein binds specifically to 23S rRNA. It makes multiple contacts with different domains of the 23S rRNA in the assembled 50S subunit and ribosome. In terms of biological role, the globular domain of the protein is located near the polypeptide exit tunnel on the outside of the subunit, while an extended beta-hairpin is found that lines the wall of the exit tunnel in the center of the 70S ribosome. The chain is Large ribosomal subunit protein uL22 from Staphylothermus marinus (strain ATCC 43588 / DSM 3639 / JCM 9404 / F1).